We begin with the raw amino-acid sequence, 721 residues long: Polyphosphate kinase (721 aa).

ATP is bound at residue Asn-54. The Mg(2+) site is built by Arg-379 and Arg-409. The region spanning 434 to 468 (THLKTHSKIALVVKRIGGELTSFVHLGTGNYNDKT) is the PLD phosphodiesterase domain. His-439 acts as the Phosphohistidine intermediate in catalysis. ATP-binding residues include Tyr-472, Arg-568, and His-596.

It belongs to the polyphosphate kinase 1 (PPK1) family. Requires Mg(2+) as cofactor. An intermediate of this reaction is the autophosphorylated ppk in which a phosphate is covalently linked to a histidine residue through a N-P bond.

It catalyses the reaction [phosphate](n) + ATP = [phosphate](n+1) + ADP. Its function is as follows. Catalyzes the reversible transfer of the terminal phosphate of ATP to form a long-chain polyphosphate (polyP). This chain is Polyphosphate kinase, found in Staphylococcus haemolyticus (strain JCSC1435).